The primary structure comprises 631 residues: Biotin--protein ligase (631 aa).

In terms of domain architecture, BPL/LPL catalytic spans 341-553; it reads ELYAKLINGC…QFDRYHRLLL (213 aa).

This sequence belongs to the biotin--protein ligase family. As to quaternary structure, monomer.

The protein localises to the cytoplasm. The enzyme catalyses apo-[methylmalonyl-CoA:pyruvate carboxytransferase] + biotin + ATP = holo-[methylmalonyl-CoA:pyruvate carboxytransferase] + AMP + diphosphate + H(+). The catalysed reaction is apo-[propionyl-CoA:carbon-dioxide ligase (ADP-forming)] + biotin + ATP = holo-[propionyl-CoA:carbon-dioxide ligase (ADP-forming)] + AMP + diphosphate + H(+). It carries out the reaction apo-[3-methylcrotonoyl-CoA:carbon-dioxide ligase (ADP-forming)] + biotin + ATP = holo-[3-methylcrotonoyl-CoA:carbon-dioxide ligase (ADP-forming)] + AMP + diphosphate + H(+). It catalyses the reaction biotin + L-lysyl-[protein] + ATP = N(6)-biotinyl-L-lysyl-[protein] + AMP + diphosphate + H(+). In terms of biological role, post-translational modification of specific protein by attachment of biotin. Acts on various carboxylases such as acetyl-CoA-carboxylase, pyruvate carboxylase, propionyl CoA carboxylase, and 3-methylcrotonyl CoA carboxylase. The polypeptide is Biotin--protein ligase (bpl1) (Schizosaccharomyces pombe (strain 972 / ATCC 24843) (Fission yeast)).